Reading from the N-terminus, the 610-residue chain is UvrABC system protein C (610 aa).

Residues 16-94 form the GIY-YIG domain; the sequence is SQPGVYRMYD…IKLYQPRYNV (79 aa). Residues 204 to 239 enclose the UVR domain; sequence DQVLTQLIARMEKASQDLAFEEAARIRDQIQAVRRV.

Belongs to the UvrC family. Interacts with UvrB in an incision complex.

Its subcellular location is the cytoplasm. In terms of biological role, the UvrABC repair system catalyzes the recognition and processing of DNA lesions. UvrC both incises the 5' and 3' sides of the lesion. The N-terminal half is responsible for the 3' incision and the C-terminal half is responsible for the 5' incision. The polypeptide is UvrABC system protein C (Salmonella paratyphi B (strain ATCC BAA-1250 / SPB7)).